Here is a 179-residue protein sequence, read N- to C-terminus: Interferon lambda-4 (179 aa).

A signal peptide spans 1–21 (MRPSVWAAVAAGLWVLCTVIA). The segment at 130–149 (SSRKVPGAQKRRHKPRRADS) is disordered.

It belongs to the lambda interferon family.

The protein localises to the cytoplasm. Its subcellular location is the secreted. Functionally, cytokine that may trigger an antiviral response activating the JAK-STAT pathway and up-regulating specifically some interferon-stimulated genes. The polypeptide is Interferon lambda-4 (IFNL4) (Homo sapiens (Human)).